The chain runs to 295 residues: Ribosomal RNA small subunit methyltransferase A (295 aa).

Positions 29, 31, 56, 77, 102, and 128 each coordinate S-adenosyl-L-methionine.

This sequence belongs to the class I-like SAM-binding methyltransferase superfamily. rRNA adenine N(6)-methyltransferase family. RsmA subfamily.

It is found in the cytoplasm. The enzyme catalyses adenosine(1518)/adenosine(1519) in 16S rRNA + 4 S-adenosyl-L-methionine = N(6)-dimethyladenosine(1518)/N(6)-dimethyladenosine(1519) in 16S rRNA + 4 S-adenosyl-L-homocysteine + 4 H(+). In terms of biological role, specifically dimethylates two adjacent adenosines (A1518 and A1519) in the loop of a conserved hairpin near the 3'-end of 16S rRNA in the 30S particle. May play a critical role in biogenesis of 30S subunits. This Listeria monocytogenes serotype 4b (strain CLIP80459) protein is Ribosomal RNA small subunit methyltransferase A.